We begin with the raw amino-acid sequence, 649 residues long: Extracellular metalloproteinase 4 (649 aa).

The signal sequence occupies residues 1-18 (MHGLLLAGLLALPSNVLG). Positions 19–260 (HPAEPPNSVN…VHGVVDYVAS (242 aa)) are excised as a propeptide. Residue histidine 443 coordinates Zn(2+). The active site involves glutamate 444. Zn(2+) is bound at residue histidine 447. N-linked (GlcNAc...) asparagine glycans are attached at residues asparagine 494 and asparagine 609.

It belongs to the peptidase M36 family. Requires Zn(2+) as cofactor.

Its subcellular location is the secreted. Secreted metalloproteinase probably acting as a virulence factor. This Arthroderma otae (strain ATCC MYA-4605 / CBS 113480) (Microsporum canis) protein is Extracellular metalloproteinase 4 (MEP4).